The sequence spans 171 residues: ATP synthase subunit b (171 aa).

Residues 26-46 traverse the membrane as a helical segment; it reads INLVLVIALLVYFLKGFLGGI.

The protein belongs to the ATPase B chain family. As to quaternary structure, F-type ATPases have 2 components, F(1) - the catalytic core - and F(0) - the membrane proton channel. F(1) has five subunits: alpha(3), beta(3), gamma(1), delta(1), epsilon(1). F(0) has four main subunits: a(1), b(1), b'(1) and c(10-14). The alpha and beta chains form an alternating ring which encloses part of the gamma chain. F(1) is attached to F(0) by a central stalk formed by the gamma and epsilon chains, while a peripheral stalk is formed by the delta, b and b' chains.

The protein localises to the cellular thylakoid membrane. In terms of biological role, f(1)F(0) ATP synthase produces ATP from ADP in the presence of a proton or sodium gradient. F-type ATPases consist of two structural domains, F(1) containing the extramembraneous catalytic core and F(0) containing the membrane proton channel, linked together by a central stalk and a peripheral stalk. During catalysis, ATP synthesis in the catalytic domain of F(1) is coupled via a rotary mechanism of the central stalk subunits to proton translocation. Its function is as follows. Component of the F(0) channel, it forms part of the peripheral stalk, linking F(1) to F(0). This is ATP synthase subunit b from Synechococcus sp. (strain RCC307).